Consider the following 367-residue polypeptide: Phosphoglycerate kinase (367 aa).

The (2R)-3-phosphoglycerate site is built by Val-1, Asp-2, Phe-3, Asn-4, Arg-17, Ser-40, His-41, Gly-43, Arg-44, Leu-98, Arg-99, His-146, and Arg-147. Gly-190 contributes to the ADP binding site. Gly-190 contacts CDP. The AMP site is built by Ala-191 and Lys-192. Residue Ala-191 coordinates ATP. Mg(2+) is bound at residue Ala-191. Mg(2+)-binding residues include Ala-194 and Asp-195. Residue Asp-195 coordinates CDP. Lys-196 is a binding site for AMP. Lys-196 provides a ligand contact to ATP. Gly-214 lines the ADP pocket. Gly-214 contacts CDP. Residues Gly-215 and Gly-289 each contribute to the AMP site. ATP contacts are provided by Gly-215 and Gly-289. CDP is bound by residues Gly-314 and Phe-319. ADP is bound at residue Phe-319. Residue Glu-320 participates in AMP binding. 3 residues coordinate ATP: Glu-320, Asp-351, and Thr-352. Asp-351 contributes to the Mg(2+) binding site.

Belongs to the phosphoglycerate kinase family. In terms of assembly, monomer. Mg(2+) serves as cofactor.

The catalysed reaction is (2R)-3-phosphoglycerate + ATP = (2R)-3-phospho-glyceroyl phosphate + ADP. It participates in carbohydrate degradation; glycolysis; pyruvate from D-glyceraldehyde 3-phosphate: step 2/5. The chain is Phosphoglycerate kinase (PGK) from Paramecium primaurelia.